The following is a 1018-amino-acid chain: Thrombospondin type-1 domain-containing protein 4 (1018 aa).

A signal peptide spans 1 to 25; that stretch reads MVSHFMGSLSVLCFLLLLGFQFVCP. The TSP type-1 1 domain occupies 53–307; that stretch reads PGVWGAWGPW…YKLCNTNVCP (255 aa). Disordered regions lie at residues 111 to 235, 254 to 279, and 534 to 623; these read SVPL…RSGL, PAAS…ATQS, and SPQV…NWKQ. Over residues 187–200 the composition is skewed to basic residues; sequence QRLRRQKLSSRHSR. Low complexity predominate over residues 201–210; it reads SQGASSARHG. Polar residues predominate over residues 259-279; sequence LFHSPETSNNHGVGTHGATQS. Composition is skewed to basic and acidic residues over residues 556–577 and 592–603; these read RSQE…RGEA and RHPDRFSPHRPD. TSP type-1 domains are found at residues 676–737, 739–792, 793–851, 852–911, and 912–968; these read CPAF…KICS, WQIR…DMGP, CAKS…GPCT, GKVE…HLKP, and CGAK…QDCV. Residues 971 to 1008 form the PLAC domain; the sequence is VDENCKDKYYNCNVVVQARLCVYNYYKTACCASCTRVA.

Interacts with FBN1. May interact with TGFB1.

It localises to the secreted. Its subcellular location is the extracellular space. The protein localises to the extracellular matrix. In terms of biological role, promotes FBN1 matrix assembly. Attenuates TGFB signaling, possibly by accelerating the sequestration of large latent complexes of TGFB or active TGFB by FBN1 microfibril assembly, thereby negatively regulating the expression of TGFB regulatory targets, such as POSTN. The protein is Thrombospondin type-1 domain-containing protein 4 (THSD4) of Homo sapiens (Human).